We begin with the raw amino-acid sequence, 86 residues long: Small ribosomal subunit protein bS18c (86 aa).

This sequence belongs to the bacterial ribosomal protein bS18 family. As to quaternary structure, part of the 30S ribosomal subunit.

Its subcellular location is the plastid. It localises to the chloroplast. The protein is Small ribosomal subunit protein bS18c of Larix laricina (Tamarack).